A 283-amino-acid chain; its full sequence is Orotidine 5'-phosphate decarboxylase (283 aa).

The active-site Proton donor is lysine 97.

It belongs to the OMP decarboxylase family. Type 2 subfamily.

The catalysed reaction is orotidine 5'-phosphate + H(+) = UMP + CO2. It participates in pyrimidine metabolism; UMP biosynthesis via de novo pathway; UMP from orotate: step 2/2. This is Orotidine 5'-phosphate decarboxylase from Clostridium botulinum (strain ATCC 19397 / Type A).